Here is a 91-residue protein sequence, read N- to C-terminus: Large ribosomal subunit protein eL31 (91 aa).

It belongs to the eukaryotic ribosomal protein eL31 family.

In Pyrobaculum calidifontis (strain DSM 21063 / JCM 11548 / VA1), this protein is Large ribosomal subunit protein eL31.